Consider the following 362-residue polypeptide: Glutamate 5-kinase (362 aa).

K3 lines the ATP pocket. Positions 43, 128, and 140 each coordinate substrate. Residues 160-161 and 202-208 contribute to the ATP site; these read TD and TGGMRTK. The PUA domain maps to 267–348; it reads AGAILVDAGA…REIENVLGYS (82 aa).

It belongs to the glutamate 5-kinase family.

Its subcellular location is the cytoplasm. It catalyses the reaction L-glutamate + ATP = L-glutamyl 5-phosphate + ADP. Its pathway is amino-acid biosynthesis; L-proline biosynthesis; L-glutamate 5-semialdehyde from L-glutamate: step 1/2. Its function is as follows. Catalyzes the transfer of a phosphate group to glutamate to form L-glutamate 5-phosphate. This Xanthomonas oryzae pv. oryzae (strain KACC10331 / KXO85) protein is Glutamate 5-kinase.